The primary structure comprises 584 residues: Glycosyltransferase family 92 protein Os08g0121900 (584 aa).

The segment covering 1–10 (MALAAKERKL) has biased composition (basic and acidic residues). The interval 1 to 33 (MALAAKERKLSRLGSKGSGGGGGGGSFGARGQR) is disordered. Residues 16 to 28 (KGSGGGGGGGSFG) are compositionally biased toward gly residues. Residues 43–63 (FAAFFAFLFAGAVLFGAAHVI) traverse the membrane as a helical segment. The 212-residue stretch at 314–525 (HSMCVCTMLR…DKFSGRVATY (212 aa)) folds into the GT92 domain.

It belongs to the glycosyltransferase 92 family.

Its subcellular location is the membrane. This is Glycosyltransferase family 92 protein Os08g0121900 from Oryza sativa subsp. japonica (Rice).